A 128-amino-acid chain; its full sequence is Sulfurtransferase TusD (128 aa).

Cys-78 functions as the Cysteine persulfide intermediate in the catalytic mechanism.

This sequence belongs to the DsrE/TusD family. Heterohexamer, formed by a dimer of trimers. The hexameric TusBCD complex contains 2 copies each of TusB, TusC and TusD. The TusBCD complex interacts with TusE.

The protein resides in the cytoplasm. Part of a sulfur-relay system required for 2-thiolation of 5-methylaminomethyl-2-thiouridine (mnm(5)s(2)U) at tRNA wobble positions. Accepts sulfur from TusA and transfers it in turn to TusE. This is Sulfurtransferase TusD from Escherichia coli (strain K12 / MC4100 / BW2952).